We begin with the raw amino-acid sequence, 231 residues long: ATP phosphoribosyltransferase (231 aa).

It belongs to the ATP phosphoribosyltransferase family. Short subfamily. Heteromultimer composed of HisG and HisZ subunits.

It is found in the cytoplasm. The enzyme catalyses 1-(5-phospho-beta-D-ribosyl)-ATP + diphosphate = 5-phospho-alpha-D-ribose 1-diphosphate + ATP. The protein operates within amino-acid biosynthesis; L-histidine biosynthesis; L-histidine from 5-phospho-alpha-D-ribose 1-diphosphate: step 1/9. In terms of biological role, catalyzes the condensation of ATP and 5-phosphoribose 1-diphosphate to form N'-(5'-phosphoribosyl)-ATP (PR-ATP). Has a crucial role in the pathway because the rate of histidine biosynthesis seems to be controlled primarily by regulation of HisG enzymatic activity. The chain is ATP phosphoribosyltransferase from Brucella ovis (strain ATCC 25840 / 63/290 / NCTC 10512).